The primary structure comprises 96 residues: Small ribosomal subunit protein bS6 (96 aa).

Belongs to the bacterial ribosomal protein bS6 family.

Functionally, binds together with bS18 to 16S ribosomal RNA. The sequence is that of Small ribosomal subunit protein bS6 from Streptococcus thermophilus (strain ATCC BAA-250 / LMG 18311).